A 422-amino-acid polypeptide reads, in one-letter code: Alcohol dehydrogenase 4 (422 aa).

The transit peptide at 1-29 (MSILRSPFRLIRSPARFFPSLFHSSCNQS) directs the protein to the mitochondrion. Residues D82, N114, G141, S142, T181, T182, T190, F192, K203, and G225 each contribute to the NAD(+) site. 3 residues coordinate Fe(2+): D237, H241, and H306. Residues H310 and H320 each contribute to the NAD(+) site. Residue H320 coordinates Fe(2+).

Belongs to the iron-containing alcohol dehydrogenase family. It depends on Zn(2+) as a cofactor.

It localises to the mitochondrion matrix. It carries out the reaction a primary alcohol + NAD(+) = an aldehyde + NADH + H(+). It catalyses the reaction a secondary alcohol + NAD(+) = a ketone + NADH + H(+). The enzyme catalyses ethanol + NAD(+) = acetaldehyde + NADH + H(+). Functionally, involved in ethanol oxidation in mitochondria. The chain is Alcohol dehydrogenase 4 (adh4) from Schizosaccharomyces pombe (strain 972 / ATCC 24843) (Fission yeast).